The sequence spans 367 residues: UDP-N-acetylglucosamine--N-acetylmuramyl-(pentapeptide) pyrophosphoryl-undecaprenol N-acetylglucosamine transferase (367 aa).

Residues 22–24 (TGG), Asn134, Arg170, Ser198, Ile253, and Gln298 each bind UDP-N-acetyl-alpha-D-glucosamine.

Belongs to the glycosyltransferase 28 family. MurG subfamily.

The protein localises to the cell inner membrane. It carries out the reaction di-trans,octa-cis-undecaprenyl diphospho-N-acetyl-alpha-D-muramoyl-L-alanyl-D-glutamyl-meso-2,6-diaminopimeloyl-D-alanyl-D-alanine + UDP-N-acetyl-alpha-D-glucosamine = di-trans,octa-cis-undecaprenyl diphospho-[N-acetyl-alpha-D-glucosaminyl-(1-&gt;4)]-N-acetyl-alpha-D-muramoyl-L-alanyl-D-glutamyl-meso-2,6-diaminopimeloyl-D-alanyl-D-alanine + UDP + H(+). Its pathway is cell wall biogenesis; peptidoglycan biosynthesis. Cell wall formation. Catalyzes the transfer of a GlcNAc subunit on undecaprenyl-pyrophosphoryl-MurNAc-pentapeptide (lipid intermediate I) to form undecaprenyl-pyrophosphoryl-MurNAc-(pentapeptide)GlcNAc (lipid intermediate II). The polypeptide is UDP-N-acetylglucosamine--N-acetylmuramyl-(pentapeptide) pyrophosphoryl-undecaprenol N-acetylglucosamine transferase (Xylella fastidiosa (strain M23)).